The sequence spans 319 residues: ATP-dependent 6-phosphofructokinase (319 aa).

An ATP-binding site is contributed by Gly-11. 21-25 (RAVVR) serves as a coordination point for ADP. ATP contacts are provided by residues 72-73 (RC) and 102-105 (GDGS). Asp-103 provides a ligand contact to Mg(2+). 125–127 (TID) lines the substrate pocket. The Proton acceptor role is filled by Asp-127. Residue Arg-154 coordinates ADP. Substrate contacts are provided by residues Arg-162 and 169–171 (MGR). ADP contacts are provided by residues 185–187 (GAE), Arg-211, and 213–215 (KKH). Residues Glu-222, Arg-243, and 249–252 (HVQR) each bind substrate.

Belongs to the phosphofructokinase type A (PFKA) family. ATP-dependent PFK group I subfamily. Prokaryotic clade 'B1' sub-subfamily. As to quaternary structure, homotetramer. Mg(2+) serves as cofactor.

It is found in the cytoplasm. It catalyses the reaction beta-D-fructose 6-phosphate + ATP = beta-D-fructose 1,6-bisphosphate + ADP + H(+). Its pathway is carbohydrate degradation; glycolysis; D-glyceraldehyde 3-phosphate and glycerone phosphate from D-glucose: step 3/4. Allosterically activated by ADP and other diphosphonucleosides, and allosterically inhibited by phosphoenolpyruvate. Functionally, catalyzes the phosphorylation of D-fructose 6-phosphate to fructose 1,6-bisphosphate by ATP, the first committing step of glycolysis. The chain is ATP-dependent 6-phosphofructokinase from Bacillus cereus (strain ATCC 14579 / DSM 31 / CCUG 7414 / JCM 2152 / NBRC 15305 / NCIMB 9373 / NCTC 2599 / NRRL B-3711).